A 121-amino-acid chain; its full sequence is Large ribosomal subunit protein uL18 (121 aa).

It belongs to the universal ribosomal protein uL18 family. As to quaternary structure, part of the 50S ribosomal subunit; part of the 5S rRNA/L5/L18/L25 subcomplex. Contacts the 5S and 23S rRNAs.

Its function is as follows. This is one of the proteins that bind and probably mediate the attachment of the 5S RNA into the large ribosomal subunit, where it forms part of the central protuberance. The chain is Large ribosomal subunit protein uL18 from Buchnera aphidicola subsp. Baizongia pistaciae (strain Bp).